We begin with the raw amino-acid sequence, 440 residues long: Chromosome partition protein MukF (440 aa).

Residues 208-236 (LSETSGTLRELQDTLEAAGDKLQANLLRI) are leucine-zipper.

This sequence belongs to the MukF family. In terms of assembly, interacts, and probably forms a ternary complex, with MukE and MukB via its C-terminal region. The complex formation is stimulated by calcium or magnesium. It is required for an interaction between MukE and MukB.

Its subcellular location is the cytoplasm. The protein localises to the nucleoid. In terms of biological role, involved in chromosome condensation, segregation and cell cycle progression. May participate in facilitating chromosome segregation by condensation DNA from both sides of a centrally located replisome during cell division. Not required for mini-F plasmid partitioning. Probably acts via its interaction with MukB and MukE. Overexpression results in anucleate cells. It has a calcium binding activity. This chain is Chromosome partition protein MukF, found in Shigella boydii serotype 18 (strain CDC 3083-94 / BS512).